We begin with the raw amino-acid sequence, 498 residues long: Glycerol kinase (498 aa).

Thr12 contributes to the ADP binding site. ATP is bound by residues Thr12, Thr13, and Ser14. Residue Thr12 participates in sn-glycerol 3-phosphate binding. Arg16 is a binding site for ADP. Sn-glycerol 3-phosphate-binding residues include Arg82, Glu83, Tyr134, and Asp243. The glycerol site is built by Arg82, Glu83, Tyr134, Asp243, and Gln244. ADP-binding residues include Thr265 and Gly308. Positions 265, 308, 312, and 411 each coordinate ATP. ADP is bound at residue Gly411.

The protein belongs to the FGGY kinase family.

It carries out the reaction glycerol + ATP = sn-glycerol 3-phosphate + ADP + H(+). Its pathway is polyol metabolism; glycerol degradation via glycerol kinase pathway; sn-glycerol 3-phosphate from glycerol: step 1/1. Inhibited by fructose 1,6-bisphosphate (FBP). Its function is as follows. Key enzyme in the regulation of glycerol uptake and metabolism. Catalyzes the phosphorylation of glycerol to yield sn-glycerol 3-phosphate. In Brucella suis biovar 1 (strain 1330), this protein is Glycerol kinase.